The chain runs to 511 residues: 2-isopropylmalate synthase (511 aa).

The region spanning 6–269 is the Pyruvate carboxyltransferase domain; the sequence is IIIFDTTLRD…YTDIKCENIF (264 aa). Mn(2+)-binding residues include D15, H203, H205, and N239. The tract at residues 394–511 is regulatory domain; it reads VIEKLSVISG…SLKVEERKMA (118 aa).

The protein belongs to the alpha-IPM synthase/homocitrate synthase family. LeuA type 1 subfamily. In terms of assembly, homodimer. It depends on Mn(2+) as a cofactor.

Its subcellular location is the cytoplasm. It carries out the reaction 3-methyl-2-oxobutanoate + acetyl-CoA + H2O = (2S)-2-isopropylmalate + CoA + H(+). The protein operates within amino-acid biosynthesis; L-leucine biosynthesis; L-leucine from 3-methyl-2-oxobutanoate: step 1/4. Catalyzes the condensation of the acetyl group of acetyl-CoA with 3-methyl-2-oxobutanoate (2-ketoisovalerate) to form 3-carboxy-3-hydroxy-4-methylpentanoate (2-isopropylmalate). In Campylobacter jejuni (strain RM1221), this protein is 2-isopropylmalate synthase.